A 28-amino-acid polypeptide reads, in one-letter code: Cliotide T21 (28 aa).

The segment at residues 1 to 28 is a cross-link (cyclopeptide (Asp-Asn)); the sequence is DLQCAETCVHSPCIGPCYCKHGLICYRN. Cystine bridges form between C4–C17, C8–C19, and C13–C25.

In terms of processing, contains 3 disulfide bonds. This is a cyclic peptide. In terms of tissue distribution, expressed in root nodules but not in seed.

Its function is as follows. Probably participates in a plant defense mechanism. Not active against Gram-negative bacterium E.coli ATCC 700926 or Gram-positive bacterium S.aureus ATCC 12600 up to a concentration of 100 uM under low-salt conditions. This is Cliotide T21 from Clitoria ternatea (Butterfly pea).